Reading from the N-terminus, the 300-residue chain is Cation-efflux pump FieF (300 aa).

Helical transmembrane passes span 12-32 (AAIA…FAWW), 39-59 (ILAA…NLLV), 82-102 (AALA…LTGI), 114-134 (PGVG…LVSF), 151-171 (MLHY…LALS), and 172-192 (WYGW…YILY). Zn(2+) contacts are provided by Asp45 and Asp49. Zn(2+)-binding residues include His153 and Asp157.

This sequence belongs to the cation diffusion facilitator (CDF) transporter (TC 2.A.4) family. FieF subfamily. Homodimer.

The protein localises to the cell inner membrane. It catalyses the reaction Zn(2+)(in) + H(+)(out) = Zn(2+)(out) + H(+)(in). The enzyme catalyses Cd(2+)(in) + H(+)(out) = Cd(2+)(out) + H(+)(in). The catalysed reaction is Fe(2+)(in) + H(+)(out) = Fe(2+)(out) + H(+)(in). In terms of biological role, divalent metal cation transporter which exports Zn(2+), Cd(2+) and possibly Fe(2+). May be involved in zinc and iron detoxification by efflux. The chain is Cation-efflux pump FieF from Escherichia fergusonii (strain ATCC 35469 / DSM 13698 / CCUG 18766 / IAM 14443 / JCM 21226 / LMG 7866 / NBRC 102419 / NCTC 12128 / CDC 0568-73).